A 227-amino-acid polypeptide reads, in one-letter code: UPF0173 metal-dependent hydrolase Cmaq_1073 (227 aa).

Belongs to the UPF0173 family.

The chain is UPF0173 metal-dependent hydrolase Cmaq_1073 from Caldivirga maquilingensis (strain ATCC 700844 / DSM 13496 / JCM 10307 / IC-167).